Reading from the N-terminus, the 105-residue chain is Large ribosomal subunit protein uL24 (105 aa).

This sequence belongs to the universal ribosomal protein uL24 family. In terms of assembly, part of the 50S ribosomal subunit.

One of two assembly initiator proteins, it binds directly to the 5'-end of the 23S rRNA, where it nucleates assembly of the 50S subunit. In terms of biological role, one of the proteins that surrounds the polypeptide exit tunnel on the outside of the subunit. The chain is Large ribosomal subunit protein uL24 from Vibrio campbellii (strain ATCC BAA-1116).